The following is a 395-amino-acid chain: Succinate--CoA ligase [ADP-forming] subunit beta (395 aa).

The region spanning 9 to 240 is the ATP-grasp domain; it reads RDVFEKHGVP…AASADPLEAK (232 aa). ATP contacts are provided by residues Lys49, 56 to 58, Ala98, and Glu103; that span reads GRG. Mg(2+) is bound by residues Asn195 and Asp209. Substrate contacts are provided by residues Asn260 and 322–324; that span reads GIT.

Belongs to the succinate/malate CoA ligase beta subunit family. Heterotetramer of two alpha and two beta subunits. Mg(2+) is required as a cofactor.

The catalysed reaction is succinate + ATP + CoA = succinyl-CoA + ADP + phosphate. It carries out the reaction GTP + succinate + CoA = succinyl-CoA + GDP + phosphate. Its pathway is carbohydrate metabolism; tricarboxylic acid cycle; succinate from succinyl-CoA (ligase route): step 1/1. Succinyl-CoA synthetase functions in the citric acid cycle (TCA), coupling the hydrolysis of succinyl-CoA to the synthesis of either ATP or GTP and thus represents the only step of substrate-level phosphorylation in the TCA. The beta subunit provides nucleotide specificity of the enzyme and binds the substrate succinate, while the binding sites for coenzyme A and phosphate are found in the alpha subunit. The chain is Succinate--CoA ligase [ADP-forming] subunit beta from Beutenbergia cavernae (strain ATCC BAA-8 / DSM 12333 / CCUG 43141 / JCM 11478 / NBRC 16432 / NCIMB 13614 / HKI 0122).